The following is a 43-amino-acid chain: Protein PsbN (43 aa).

Residues 4–24 (ATVLSITFAVILIAITGLAVY) form a helical membrane-spanning segment.

This sequence belongs to the PsbN family.

It is found in the cellular thylakoid membrane. May play a role in photosystem I and II biogenesis. The sequence is that of Protein PsbN from Synechocystis sp. (strain ATCC 27184 / PCC 6803 / Kazusa).